A 184-amino-acid polypeptide reads, in one-letter code: ATP synthase subunit b, chloroplastic (184 aa).

The chain crosses the membrane as a helical span at residues 27-49 (LATNPINLSVVLGVLIFFGKGVL).

This sequence belongs to the ATPase B chain family. As to quaternary structure, F-type ATPases have 2 components, F(1) - the catalytic core - and F(0) - the membrane proton channel. F(1) has five subunits: alpha(3), beta(3), gamma(1), delta(1), epsilon(1). F(0) has four main subunits: a(1), b(1), b'(1) and c(10-14). The alpha and beta chains form an alternating ring which encloses part of the gamma chain. F(1) is attached to F(0) by a central stalk formed by the gamma and epsilon chains, while a peripheral stalk is formed by the delta, b and b' chains.

It localises to the plastid. The protein resides in the chloroplast thylakoid membrane. Functionally, f(1)F(0) ATP synthase produces ATP from ADP in the presence of a proton or sodium gradient. F-type ATPases consist of two structural domains, F(1) containing the extramembraneous catalytic core and F(0) containing the membrane proton channel, linked together by a central stalk and a peripheral stalk. During catalysis, ATP synthesis in the catalytic domain of F(1) is coupled via a rotary mechanism of the central stalk subunits to proton translocation. Component of the F(0) channel, it forms part of the peripheral stalk, linking F(1) to F(0). In Atropa belladonna (Belladonna), this protein is ATP synthase subunit b, chloroplastic.